A 177-amino-acid polypeptide reads, in one-letter code: Large ribosomal subunit protein uL6 (177 aa).

K44 is modified (N6-acetyllysine).

Belongs to the universal ribosomal protein uL6 family. Part of the 50S ribosomal subunit.

This protein binds to the 23S rRNA, and is important in its secondary structure. It is located near the subunit interface in the base of the L7/L12 stalk, and near the tRNA binding site of the peptidyltransferase center. This Escherichia fergusonii (strain ATCC 35469 / DSM 13698 / CCUG 18766 / IAM 14443 / JCM 21226 / LMG 7866 / NBRC 102419 / NCTC 12128 / CDC 0568-73) protein is Large ribosomal subunit protein uL6.